A 2000-amino-acid chain; its full sequence is E3 ubiquitin-protein ligase TTC3 (2000 aa).

Residues 20-249 form an interaction with POLG region; it reads MDDFAEGGLS…RHSCMQCVKQ (230 aa). TPR repeat units follow at residues 250-283 and 284-317; these read GELM…RPEN and HLLY…KNTW. Ser397 carries the phosphoserine modification. Residues 442-478 are disordered; the sequence is CDCHPEFLPPPSQPPRHKGKQKSRNNESEKPSSNSQV. TPR repeat units follow at residues 556-592 and 596-629; these read VLVV…YPNE and CLAY…ICRL. The disordered stretch occupies residues 804–828; sequence AQERMEEDLRESNPPKPEEPEETVE. A Phosphoserine modification is found at Ser1029. 5 disordered regions span residues 1041–1087, 1233–1308, 1423–1448, 1806–1839, and 1894–1947; these read NKGK…GPFA, FQPD…PEDA, QSST…SSDS, LEVK…QSQK, and EEQK…VPAP. Residues 1059–1070 show a composition bias toward polar residues; it reads GTASVTPSSETV. The residue at position 1080 (Ser1080) is a Phosphoserine. Residues 1268–1277 show a composition bias toward low complexity; that stretch reads DSDSSSGSAS. Over residues 1829–1839 the composition is skewed to polar residues; sequence GQATRSSQSQK. Residues 1894-1911 show a composition bias toward basic and acidic residues; it reads EEQKKKKPNPGKDKKTSE. Residues 1912 to 1934 are compositionally biased toward low complexity; sequence AHPAASVSKSSPSPPLAAAGPSA. The RING-type; atypical zinc finger occupies 1952 to 1991; the sequence is CQICHEIFKSKNMRVLKCGHKFHKGCFKQWLKGQSTCPTC.

As to quaternary structure, interacts (when phosphorylated on Ser-397) with AKT1, AKT2 and AKT3 (when phosphorylated). Interacts with CIT. Interacts with POLG. Interacts with HSP70. Interacts with SMURF2. Phosphorylation on Ser-397 by Akt is required for ubiquitin ligase activity. Post-translationally, proteolytically cleaved into differently sized N- and C-terminal fragments.

Its subcellular location is the nucleus. It localises to the cytoplasm. The protein resides in the golgi apparatus. It catalyses the reaction S-ubiquitinyl-[E2 ubiquitin-conjugating enzyme]-L-cysteine + [acceptor protein]-L-lysine = [E2 ubiquitin-conjugating enzyme]-L-cysteine + N(6)-ubiquitinyl-[acceptor protein]-L-lysine.. The protein operates within protein modification; protein ubiquitination. Its function is as follows. E3 ubiquitin-protein ligase which catalyzes the formation of 'Lys-48'-polyubiquitin chains. Mediates the ubiquitination and subsequent degradation of phosphorylated Akt (AKT1, AKT2 and AKT3) in the nucleus. Acts as a terminal regulator of Akt signaling after activation; its phosphorylation by Akt, which is a prerequisite for ubiquitin ligase activity, suggests the existence of a regulation mechanism required to control Akt levels after activation. Positively regulates TGFB1-induced epithelial-mesenchymal transition and myofibroblast differentiation by mediating the ubiquitination and subsequent degradation of SMURF2. Regulates neuronal differentiation by regulating actin remodeling and Golgi organization via a signaling cascade involving RHOA, CIT and ROCK. Inhibits cell proliferation. This Rattus norvegicus (Rat) protein is E3 ubiquitin-protein ligase TTC3.